A 531-amino-acid chain; its full sequence is SWI/SNF-related matrix-associated actin-dependent regulator of chromatin subfamily D member 2 (531 aa).

Positions 20–85 (AVAAALGAPP…MSPGSRMPMA (66 aa)) are disordered. Low complexity predominate over residues 34–45 (PGMLPSPALRGP). 2 positions are modified to asymmetric dimethylarginine: Arg-81 and Arg-104. Ser-203 is subject to Phosphoserine. A disordered region spans residues 205-226 (SKADGDNAGTAGTPGGTPAADK). The segment covering 210–225 (DNAGTAGTPGGTPAAD) has biased composition (low complexity). A Phosphothreonine modification is found at Thr-217. Lys-226 is covalently cross-linked (Glycyl lysine isopeptide (Lys-Gly) (interchain with G-Cter in SUMO2)). Positions 306–383 (HQPPQYKLDP…PMKLAGLLQH (78 aa)) constitute an SWIB/MDM2 domain.

Belongs to the SMARCD family. Component of the multiprotein chromatin-remodeling complexes SWI/SNF: SWI/SNF-A (BAF), SWI/SNF-B (PBAF) and related complexes. The canonical complex contains a catalytic subunit (either SMARCA4/BRG1/BAF190A or SMARCA2/BRM/BAF190B), and at least SMARCE1, ACTL6A/BAF53, SMARCC1/BAF155, SMARCC2/BAF170, and SMARCB1/SNF5/BAF47. Other subunits specific to each of the complexes may also be present permitting several possible combinations developmentally and tissue specific. Component of the BAF complex, which includes at least actin (ACTB), ARID1A/BAF250A, ARID1B/BAF250B, SMARCA2/BRM, SMARCA4/BRG1, ACTL6A/BAF53, ACTL6B/BAF53B, SMARCE1/BAF57, SMARCC1/BAF155, SMARCC2/BAF170, SMARCB1/SNF5/INI1, and one or more SMARCD1/BAF60A, SMARCD2/BAF60B, or SMARCD3/BAF60C. In muscle cells, the BAF complex also contains DPF3. Component of the SWI/SNF-B (PBAF) chromatin remodeling complex, at least composed of SMARCA4/BRG1, SMARCB1/BAF47/SNF5, ACTL6A/BAF53A or ACTL6B/BAF53B, SMARCE1/BAF57, SMARCD1/BAF60A, SMARCD2/BAF60B, perhaps SMARCD3/BAF60C, SMARCC1/BAF155, SMARCC2/BAF170, PBRM1/BAF180, ARID2/BAF200 and actin (ACTB). Interacts with UNKL. Interacts with CEBPE. In terms of processing, ubiquitinated through a signaling process involving RAC1 and the RING finger protein UNKL.

Its subcellular location is the nucleus. In terms of biological role, involved in transcriptional activation and repression of select genes by chromatin remodeling (alteration of DNA-nucleosome topology). Component of SWI/SNF chromatin remodeling complexes that carry out key enzymatic activities, changing chromatin structure by altering DNA-histone contacts within a nucleosome in an ATP-dependent manner. Critical regulator of myeloid differentiation, controlling granulocytopoiesis and the expression of genes involved in neutrophil granule formation. The sequence is that of SWI/SNF-related matrix-associated actin-dependent regulator of chromatin subfamily D member 2 (Smarcd2) from Mus musculus (Mouse).